The primary structure comprises 149 residues: Large ribosomal subunit protein uL24 (149 aa).

This sequence belongs to the universal ribosomal protein uL24 family. As to quaternary structure, part of the 50S ribosomal subunit.

Its function is as follows. One of two assembly initiator proteins, it binds directly to the 5'-end of the 23S rRNA, where it nucleates assembly of the 50S subunit. Functionally, located at the polypeptide exit tunnel on the outside of the subunit. This chain is Large ribosomal subunit protein uL24, found in Hyperthermus butylicus (strain DSM 5456 / JCM 9403 / PLM1-5).